We begin with the raw amino-acid sequence, 550 residues long: Silent protein UshA(0) (550 aa).

Residues 1 to 25 (MKFLKRGVALALLAAFALTTQPAQA) form the signal peptide. A divalent metal cation-binding residues include Asp-41, His-43, Asp-84, Asn-116, His-217, His-252, and Gln-254. The cysteines at positions 258 and 275 are disulfide-linked. Substrate contacts are provided by residues Phe-429 and 498–504 (FNATGGD).

It belongs to the 5'-nucleotidase family. A divalent metal cation serves as cofactor.

The protein localises to the periplasm. The sequence is that of Silent protein UshA(0) (ushA) from Salmonella typhimurium (strain LT2 / SGSC1412 / ATCC 700720).